Here is a 600-residue protein sequence, read N- to C-terminus: NADH-quinone oxidoreductase subunit C/D (600 aa).

The NADH dehydrogenase I subunit C stretch occupies residues 1–190; that stretch reads MIDLMPKKNT…EPFFLNEQKE (190 aa). Residues 214-600 are NADH dehydrogenase I subunit D; it reads EFMFLNLGPN…IDFVMSDVDR (387 aa).

In the N-terminal section; belongs to the complex I 30 kDa subunit family. It in the C-terminal section; belongs to the complex I 49 kDa subunit family. In terms of assembly, NDH-1 is composed of 13 different subunits. Subunits NuoB, CD, E, F, and G constitute the peripheral sector of the complex.

Its subcellular location is the cell membrane. It carries out the reaction a quinone + NADH + 5 H(+)(in) = a quinol + NAD(+) + 4 H(+)(out). Its function is as follows. NDH-1 shuttles electrons from NADH, via FMN and iron-sulfur (Fe-S) centers, to quinones in the respiratory chain. The immediate electron acceptor for the enzyme in this species is believed to be ubiquinone. Couples the redox reaction to proton translocation (for every two electrons transferred, four hydrogen ions are translocated across the cytoplasmic membrane), and thus conserves the redox energy in a proton gradient. In Buchnera aphidicola subsp. Acyrthosiphon pisum (strain Tuc7), this protein is NADH-quinone oxidoreductase subunit C/D.